The following is a 271-amino-acid chain: Probable L,D-transpeptidase 3 (271 aa).

The region spanning 127-270 (VVGVASISQH…VDIGDPVIVQ (144 aa)) is the L,D-TPase catalytic domain. The active-site Proton donor/acceptor is the H228. Catalysis depends on C246, which acts as the Nucleophile.

Its pathway is cell wall biogenesis; peptidoglycan biosynthesis. With respect to regulation, is irreversibly inactivated by the beta-lactam carbapenems via the formation of a covalent adduct resulting from acylation of the catalytic Cys. Imipenem is the most efficient drug for in vitro LdtMt3/Rv1433 inactivation. Functionally, probable L,D-transpeptidase that may perform as-yet-unknown cross-linking reactions in M.tuberculosis. Is not able to generate 3-&gt;3 cross-links in peptidoglycan, using tetrapeptide stems as acyl donor substrates. May function in the anchoring of proteins to peptidoglycan. The chain is Probable L,D-transpeptidase 3 from Mycobacterium tuberculosis (strain ATCC 25618 / H37Rv).